The following is a 312-amino-acid chain: Undecaprenyl-diphosphatase (312 aa).

A run of 7 helical transmembrane segments spans residues 74 to 94 (GVAFTAVIQLGSIVSIVWYFW), 122 to 142 (VSIGLGTIPIVFFGLLIKVFI), 154 to 174 (VAIAIASIIMALLLVIAERIG), 183 to 203 (LDIRDGIVIGLAQVLALIPGV), 226 to 246 (FSFLLGLPAITLAGLVELKTL), 254 to 274 (VGLVATLTGVFSAIIFSYIAI), and 288 to 308 (IFIWYRLAFGILILIGIISGV).

The protein belongs to the UppP family.

Its subcellular location is the cell inner membrane. The catalysed reaction is di-trans,octa-cis-undecaprenyl diphosphate + H2O = di-trans,octa-cis-undecaprenyl phosphate + phosphate + H(+). Functionally, catalyzes the dephosphorylation of undecaprenyl diphosphate (UPP). Confers resistance to bacitracin. The chain is Undecaprenyl-diphosphatase from Trichodesmium erythraeum (strain IMS101).